The following is a 131-amino-acid chain: D-ribose pyranase (131 aa).

H20 functions as the Proton donor in the catalytic mechanism. Residues D28, H98, and Y120 to N122 each bind substrate.

The protein belongs to the RbsD / FucU family. RbsD subfamily. As to quaternary structure, homodecamer.

Its subcellular location is the cytoplasm. It catalyses the reaction beta-D-ribopyranose = beta-D-ribofuranose. It functions in the pathway carbohydrate metabolism; D-ribose degradation; D-ribose 5-phosphate from beta-D-ribopyranose: step 1/2. In terms of biological role, catalyzes the interconversion of beta-pyran and beta-furan forms of D-ribose. This Bacillus cereus (strain ATCC 10987 / NRS 248) protein is D-ribose pyranase.